The chain runs to 326 residues: Cytosolic sulfotransferase 12 (326 aa).

75 to 80 serves as a coordination point for 3'-phosphoadenylyl sulfate; the sequence is KSGTTW. The active-site Proton acceptor is H140. Residues R162, S170, Y228, and 290–292 each bind 3'-phosphoadenylyl sulfate; that span reads RKG.

Belongs to the sulfotransferase 1 family. In terms of assembly, dimer. As to expression, expressed in the aerial parts of seedlings, in roots, leaves and flowers. Not detected in stems and siliques.

It localises to the cytoplasm. Its function is as follows. Sulfotransferase that utilizes 3'-phospho-5'-adenylyl sulfate (PAPS) as sulfonate donor to catalyze the stereospecific sulfate conjugation of 24-epibrassinosteroids. Preferred substrates are 24-epicathasterone and 6-deoxo-24-epicathasterone. Low activity with 22-deoxy-24-epiteasterone. No activity with 24-epimers catasterone and brassinolide. Sulfonates salicylic acid. May be involved in detoxification. Enhances plant response to pathogen infection and contributes to long distance signaling in systemic acquired resistance (SAR). This Arabidopsis thaliana (Mouse-ear cress) protein is Cytosolic sulfotransferase 12 (SOT12).